The primary structure comprises 246 residues: Granzyme H (246 aa).

The N-terminal stretch at 1 to 18 is a signal peptide; sequence MQPFLLLLAFLLTPGAGT. Positions 19–20 are cleaved as a propeptide — activation peptide; it reads EE. Residues 21-244 form the Peptidase S1 domain; it reads IIGGHEAKPH…FLPWIKRTMK (224 aa). Positions 46–48 are mediates the preference for acidic residues at the P3' and P4' sites; it reads RKR. The cysteines at positions 49 and 65 are disulfide-linked. His-64 acts as the Charge relay system in catalysis. Asn-71 and Asn-104 each carry an N-linked (GlcNAc...) asparagine glycan. The active-site Charge relay system is Asp-108. Intrachain disulfides connect Cys-142–Cys-208 and Cys-172–Cys-187. N-linked (GlcNAc...) asparagine glycosylation is present at Asn-179. The Charge relay system role is filled by Ser-202.

Belongs to the peptidase S1 family. Granzyme subfamily. In terms of tissue distribution, constitutively expressed in NK cells.

Its subcellular location is the cytolytic granule. With respect to regulation, inhibited by SERPINB1. Functionally, cytotoxic chymotrypsin-like serine protease with preference for bulky and aromatic residues at the P1 position and acidic residues at the P3' and P4' sites. Probably necessary for target cell lysis in cell-mediated immune responses. Participates in the antiviral response via direct cleavage of several proteins essential for viral replication. The polypeptide is Granzyme H (GZMH) (Homo sapiens (Human)).